A 99-amino-acid polypeptide reads, in one-letter code: Aspartyl/glutamyl-tRNA(Asn/Gln) amidotransferase subunit C (99 aa).

Belongs to the GatC family. As to quaternary structure, heterotrimer of A, B and C subunits.

The catalysed reaction is L-glutamyl-tRNA(Gln) + L-glutamine + ATP + H2O = L-glutaminyl-tRNA(Gln) + L-glutamate + ADP + phosphate + H(+). The enzyme catalyses L-aspartyl-tRNA(Asn) + L-glutamine + ATP + H2O = L-asparaginyl-tRNA(Asn) + L-glutamate + ADP + phosphate + 2 H(+). Allows the formation of correctly charged Asn-tRNA(Asn) or Gln-tRNA(Gln) through the transamidation of misacylated Asp-tRNA(Asn) or Glu-tRNA(Gln) in organisms which lack either or both of asparaginyl-tRNA or glutaminyl-tRNA synthetases. The reaction takes place in the presence of glutamine and ATP through an activated phospho-Asp-tRNA(Asn) or phospho-Glu-tRNA(Gln). In Corynebacterium diphtheriae (strain ATCC 700971 / NCTC 13129 / Biotype gravis), this protein is Aspartyl/glutamyl-tRNA(Asn/Gln) amidotransferase subunit C.